Here is a 433-residue protein sequence, read N- to C-terminus: Enolase (433 aa).

Position 166 (Gln-166) interacts with (2R)-2-phosphoglycerate. Glu-208 (proton donor) is an active-site residue. Residues Asp-245, Glu-290, and Asp-317 each contribute to the Mg(2+) site. 4 residues coordinate (2R)-2-phosphoglycerate: Lys-342, Arg-371, Ser-372, and Lys-393. Residue Lys-342 is the Proton acceptor of the active site.

The protein belongs to the enolase family. It depends on Mg(2+) as a cofactor.

The protein localises to the cytoplasm. The protein resides in the secreted. It is found in the cell surface. The catalysed reaction is (2R)-2-phosphoglycerate = phosphoenolpyruvate + H2O. The protein operates within carbohydrate degradation; glycolysis; pyruvate from D-glyceraldehyde 3-phosphate: step 4/5. Its function is as follows. Catalyzes the reversible conversion of 2-phosphoglycerate (2-PG) into phosphoenolpyruvate (PEP). It is essential for the degradation of carbohydrates via glycolysis. In Clostridium novyi (strain NT), this protein is Enolase.